We begin with the raw amino-acid sequence, 410 residues long: Lissencephaly-1 homolog (410 aa).

A LisH domain is found at 7–39; that stretch reads QRDELNRAIADYLRSNGYEEAYSTFKKEAELDN. A coiled-coil region spans residues 32-82; the sequence is KKEAELDNNEELDKKYAGLLEKKWTSVIRLQKKVMELESKLNEAKEEITLG. WD repeat units follow at residues 106–147, 148–189, 190–229, 232–271, 274–333, 336–375, and 378–410; these read GHRS…RTLK, GHTD…RTMH, GHDH…CVKT, GHRE…CKAE, EHEH…CLMT, GHDN…CMKT, and AHEH…WECR.

Belongs to the WD repeat LIS1/nudF family. As to quaternary structure, can self-associate. Component of the cytosolic PAF-AH (I) heterotetrameric enzyme, which is composed of PAFAH1B1 (beta), PAFAH1B2 (alpha2) and PAFAH1B3 (alpha1) subunits. The catalytic activity of the enzyme resides in the alpha1 (PAFAH1B3) and alpha2 (PAFAH1B2) subunits, whereas the beta subunit (PAFAH1B1) has regulatory activity. Trimer formation is not essential for the catalytic activity. Interacts with dynein, dynactin, nde1 and ndel1.

The protein resides in the cytoplasm. It is found in the cytoskeleton. The protein localises to the microtubule organizing center. Its subcellular location is the centrosome. Its function is as follows. Regulatory subunit (beta subunit) of the cytosolic type I platelet-activating factor (PAF) acetylhydrolase (PAF-AH (I)), an enzyme that catalyzes the hydrolyze of the acetyl group at the sn-2 position of PAF and its analogs and participates in the PAF inactivation. Positively regulates the activity of the minus-end directed microtubule motor protein dynein. May enhance dynein-mediated microtubule sliding by targeting dynein to the microtubule plus end. Required for several dynein- and microtubule-dependent processes such as the maintenance of Golgi integrity, the peripheral transport of microtubule fragments and the coupling of the nucleus and centrosome. May be required for proliferation of neuronal precursors and neuronal migration. This chain is Lissencephaly-1 homolog (pafah1b1), found in Tetraodon nigroviridis (Spotted green pufferfish).